The chain runs to 274 residues: Diaminopimelate epimerase (274 aa).

Residues Asn-11 and Asn-65 each coordinate substrate. Cys-74 serves as the catalytic Proton donor. Substrate is bound by residues 75–76 (GN), Asn-158, Asn-191, and 209–210 (ER). The active-site Proton acceptor is Cys-218. 219–220 (GT) is a substrate binding site.

The protein belongs to the diaminopimelate epimerase family. Homodimer.

It localises to the cytoplasm. The enzyme catalyses (2S,6S)-2,6-diaminopimelate = meso-2,6-diaminopimelate. It participates in amino-acid biosynthesis; L-lysine biosynthesis via DAP pathway; DL-2,6-diaminopimelate from LL-2,6-diaminopimelate: step 1/1. Its function is as follows. Catalyzes the stereoinversion of LL-2,6-diaminopimelate (L,L-DAP) to meso-diaminopimelate (meso-DAP), a precursor of L-lysine and an essential component of the bacterial peptidoglycan. The protein is Diaminopimelate epimerase of Carboxydothermus hydrogenoformans (strain ATCC BAA-161 / DSM 6008 / Z-2901).